Reading from the N-terminus, the 237-residue chain is Small ribosomal subunit protein uS3 (237 aa).

Residues 39-107 (VRQFLTKELK…PAQINISEVR (69 aa)) form the KH type-2 domain.

The protein belongs to the universal ribosomal protein uS3 family. In terms of assembly, part of the 30S ribosomal subunit. Forms a tight complex with proteins S10 and S14.

In terms of biological role, binds the lower part of the 30S subunit head. Binds mRNA in the 70S ribosome, positioning it for translation. The chain is Small ribosomal subunit protein uS3 from Aeromonas hydrophila subsp. hydrophila (strain ATCC 7966 / DSM 30187 / BCRC 13018 / CCUG 14551 / JCM 1027 / KCTC 2358 / NCIMB 9240 / NCTC 8049).